The chain runs to 94 residues: Pyrimidine/purine nucleoside phosphorylase (94 aa).

This sequence belongs to the nucleoside phosphorylase PpnP family.

It catalyses the reaction a purine D-ribonucleoside + phosphate = a purine nucleobase + alpha-D-ribose 1-phosphate. It carries out the reaction adenosine + phosphate = alpha-D-ribose 1-phosphate + adenine. The enzyme catalyses cytidine + phosphate = cytosine + alpha-D-ribose 1-phosphate. The catalysed reaction is guanosine + phosphate = alpha-D-ribose 1-phosphate + guanine. It catalyses the reaction inosine + phosphate = alpha-D-ribose 1-phosphate + hypoxanthine. It carries out the reaction thymidine + phosphate = 2-deoxy-alpha-D-ribose 1-phosphate + thymine. The enzyme catalyses uridine + phosphate = alpha-D-ribose 1-phosphate + uracil. The catalysed reaction is xanthosine + phosphate = alpha-D-ribose 1-phosphate + xanthine. Its function is as follows. Catalyzes the phosphorolysis of diverse nucleosides, yielding D-ribose 1-phosphate and the respective free bases. Can use uridine, adenosine, guanosine, cytidine, thymidine, inosine and xanthosine as substrates. Also catalyzes the reverse reactions. This Pseudomonas putida (strain W619) protein is Pyrimidine/purine nucleoside phosphorylase.